Consider the following 153-residue polypeptide: UPF0266 membrane protein YE1773 (153 aa).

Transmembrane regions (helical) follow at residues 6-26 (IVLIVFIALLLAYAIYDEFIM), 45-65 (IDCAIFVGLIAILVYNNVMAN), and 67-87 (EPLTTYLLVGLALIAFYLSYI).

It belongs to the UPF0266 family.

The protein localises to the cell inner membrane. The sequence is that of UPF0266 membrane protein YE1773 from Yersinia enterocolitica serotype O:8 / biotype 1B (strain NCTC 13174 / 8081).